Here is a 403-residue protein sequence, read N- to C-terminus: Keratin, type I cytoskeletal 19 (403 aa).

The interval 1–82 is head; sequence MTSYSYRQTS…AVSDGLLSGN (82 aa). Residue arginine 7 is modified to Omega-N-methylarginine. A phosphoserine mark is found at serine 14 and serine 22. Residue arginine 24 is modified to Asymmetric dimethylarginine; alternate. An Omega-N-methylarginine; alternate modification is found at arginine 24. Serine 27 is modified (phosphoserine). Residue arginine 32 is modified to Omega-N-methylarginine. Residues serine 35 and serine 40 each carry the phosphoserine modification. An omega-N-methylarginine mark is found at arginine 43 and arginine 51. The residue at position 57 (serine 57) is a Phosphoserine. Omega-N-methylarginine is present on arginine 64. Phosphoserine is present on residues serine 67 and serine 75. The segment at 83–118 is coil 1A; that stretch reads EKITMQNLNDRLASYLDKVRALEQANGELEVKIRDW. Residues 83–394 enclose the IF rod domain; that stretch reads EKITMQNLND…SLLEGQEAHY (312 aa). Residues 119 to 136 form a linker 1 region; the sequence is YQKQGPGPSRDYNHYFKT. The tract at residues 137–228 is coil 1B; it reads IEDLRDKILG…KNHEEEITAL (92 aa). A linker 12 region spans residues 229 to 251; the sequence is RSQVGGQVSVEVDSTPGVDLAKI. Residues 247-393 form a necessary for interaction with PNN region; it reads DLAKILSEMR…RSLLEGQEAH (147 aa). The segment at 252–390 is coil 2; the sequence is LSEMRSQYEI…ATYRSLLEGQ (139 aa). Threonine 326 is subject to Phosphothreonine. A rod-like helical tail region spans residues 391-403; sequence EAHYNNLPTPKAI. Position 394 is a phosphotyrosine (tyrosine 394).

Belongs to the intermediate filament family. As to quaternary structure, heterotetramer of two type I and two type II keratins. Interacts with PNN and the actin-binding domain of DMD.

Involved in the organization of myofibers. Together with KRT8, helps to link the contractile apparatus to dystrophin at the costameres of striated muscle. In Mus musculus (Mouse), this protein is Keratin, type I cytoskeletal 19 (Krt19).